The sequence spans 395 residues: Elongation factor Tu (395 aa).

Positions 10-204 (KPHVNVGTIG…AVDNWVPLPE (195 aa)) constitute a tr-type G domain. The G1 stretch occupies residues 19–26 (GHVDHGKT). 19–26 (GHVDHGKT) serves as a coordination point for GTP. Thr-26 is a Mg(2+) binding site. The tract at residues 60–64 (GITIN) is G2. Residues 81–84 (DCPG) are G3. Residues 81–85 (DCPGH) and 136–139 (NKCD) contribute to the GTP site. Residues 136-139 (NKCD) are G4. Residues 174 to 176 (SAL) form a G5 region.

The protein belongs to the TRAFAC class translation factor GTPase superfamily. Classic translation factor GTPase family. EF-Tu/EF-1A subfamily. As to quaternary structure, monomer.

The protein resides in the cytoplasm. It catalyses the reaction GTP + H2O = GDP + phosphate + H(+). Its function is as follows. GTP hydrolase that promotes the GTP-dependent binding of aminoacyl-tRNA to the A-site of ribosomes during protein biosynthesis. This Porphyromonas gingivalis (strain ATCC 33277 / DSM 20709 / CIP 103683 / JCM 12257 / NCTC 11834 / 2561) protein is Elongation factor Tu.